We begin with the raw amino-acid sequence, 69 residues long: Large ribosomal subunit protein bL31 (69 aa).

Positions 16, 18, 38, and 41 each coordinate Zn(2+).

Belongs to the bacterial ribosomal protein bL31 family. Type A subfamily. As to quaternary structure, part of the 50S ribosomal subunit. The cofactor is Zn(2+).

In terms of biological role, binds the 23S rRNA. This chain is Large ribosomal subunit protein bL31, found in Thermobifida fusca (strain YX).